A 333-amino-acid polypeptide reads, in one-letter code: Phosphoribosylformylglycinamidine cyclo-ligase (333 aa).

This sequence belongs to the AIR synthase family.

Its subcellular location is the cytoplasm. It carries out the reaction 2-formamido-N(1)-(5-O-phospho-beta-D-ribosyl)acetamidine + ATP = 5-amino-1-(5-phospho-beta-D-ribosyl)imidazole + ADP + phosphate + H(+). The protein operates within purine metabolism; IMP biosynthesis via de novo pathway; 5-amino-1-(5-phospho-D-ribosyl)imidazole from N(2)-formyl-N(1)-(5-phospho-D-ribosyl)glycinamide: step 2/2. This Clostridium perfringens (strain 13 / Type A) protein is Phosphoribosylformylglycinamidine cyclo-ligase.